The following is a 499-amino-acid chain: Cytochrome P450 71A27 (499 aa).

A helical membrane pass occupies residues 3–23 (MILISLCLTTLLAFLFLKPLL). Residue Cys-438 participates in heme binding.

The protein belongs to the cytochrome P450 family. Heme serves as cofactor.

It is found in the membrane. The polypeptide is Cytochrome P450 71A27 (CYP71A27) (Arabidopsis thaliana (Mouse-ear cress)).